The primary structure comprises 601 residues: Glutathione-regulated potassium-efflux system protein KefB (601 aa).

The next 13 membrane-spanning stretches (helical) occupy residues 5–25, 29–49, 55–75, 87–107, 115–135, 152–172, 177–197, 207–227, 230–250, 261–281, 284–304, 326–346, and 356–376; these read DLLLAGVLFLFAAVVAVPLAA, IGAVLGYLLAGIAIGPWGLGF, EILHFSELGVVFLMFIIGLEL, IFGVGAAQVLFSAVILGGLLM, AAVIGGIGLAMSSTAMALQLM, VLLFQDLAVIPALALVPLLAG, HFDWMKVGMKVLAFVGMLIGG, FIAASGVREVFTAATLLLVLG, LFMDALGLSMALGTFIAGILL, IAIDPFKGLLLGLFFISVGMA, LGVLYTHLLWVVVSVAVLVAV, FAGVLSQGGEFAFVLFSTAAS, and ALLLVTVTLSMMTTPLLMKLI. One can recognise an RCK N-terminal domain in the interval 400-518; the sequence is KPQVIVVGFG…QAGVTNFSRE (119 aa).

This sequence belongs to the monovalent cation:proton antiporter 2 (CPA2) transporter (TC 2.A.37) family. KefB subfamily. In terms of assembly, interacts with the regulatory subunit KefG.

Its subcellular location is the cell inner membrane. Functionally, pore-forming subunit of a potassium efflux system that confers protection against electrophiles. Catalyzes K(+)/H(+) antiport. This Enterobacter sp. (strain 638) protein is Glutathione-regulated potassium-efflux system protein KefB.